The chain runs to 551 residues: Arylsulfatase (551 aa).

The N-terminal stretch at 1–20 is a signal peptide; it reads MKSAPFLFLLGLLGLVTAQT. Glutamine 21 bears the Blocked amino end (Gln) mark. Ca(2+)-binding residues include aspartate 60, histidine 61, and cysteine 100. Catalysis depends on cysteine 100, which acts as the Nucleophile. Cysteine 100 bears the 3-oxoalanine (Cys) mark. Histidine 158 is a catalytic residue. N-linked (GlcNAc...) asparagine glycosylation is found at asparagine 164, asparagine 213, and asparagine 296. Ca(2+) is bound by residues aspartate 308 and histidine 309.

It belongs to the sulfatase family. Ca(2+) serves as cofactor. Post-translationally, the conversion to 3-oxoalanine (also known as C-formylglycine, FGly), of a serine or cysteine residue in prokaryotes and of a cysteine residue in eukaryotes, is critical for catalytic activity.

The protein resides in the cytoplasm. Its subcellular location is the secreted. It is found in the extracellular space. It localises to the extracellular matrix. The catalysed reaction is an aryl sulfate + H2O = a phenol + sulfate + H(+). May be a structural component of the extracellular matrices involved in cell movement during morphogenesis. This Hemicentrotus pulcherrimus (Sea urchin) protein is Arylsulfatase.